The chain runs to 106 residues: MRKRREGTANNSPTPEVTRVRTPRKENHEVLATVGSLLGSKRVNLQCMDGVVRMGRIPGSKNKKMWIREGDIVIATPWEIQDSKADVIWKYTRPQIEWLERKGYLK.

A disordered region spans residues 1–24 (MRKRREGTANNSPTPEVTRVRTPR). The S1-like domain maps to 18–92 (TRVRTPRKEN…SKADVIWKYT (75 aa)).

Belongs to the eIF-1A family.

Functionally, seems to be required for maximal rate of protein biosynthesis. Enhances ribosome dissociation into subunits and stabilizes the binding of the initiator Met-tRNA(I) to 40 S ribosomal subunits. In Methanosarcina mazei (strain ATCC BAA-159 / DSM 3647 / Goe1 / Go1 / JCM 11833 / OCM 88) (Methanosarcina frisia), this protein is Translation initiation factor 1A 2 (eIF1A2).